A 100-amino-acid chain; its full sequence is Small ribosomal subunit protein uS14c (100 aa).

Belongs to the universal ribosomal protein uS14 family. Part of the 30S ribosomal subunit.

Its subcellular location is the plastid. Its function is as follows. Binds 16S rRNA, required for the assembly of 30S particles. The protein is Small ribosomal subunit protein uS14c (rps14) of Cuscuta gronovii (Common dodder).